A 248-amino-acid chain; its full sequence is Ribosomal RNA small subunit methyltransferase J (248 aa).

S-adenosyl-L-methionine is bound by residues 98–99, 114–115, 150–151, and aspartate 168; these read RD, ER, and SS.

This sequence belongs to the methyltransferase superfamily. RsmJ family.

The protein resides in the cytoplasm. The enzyme catalyses guanosine(1516) in 16S rRNA + S-adenosyl-L-methionine = N(2)-methylguanosine(1516) in 16S rRNA + S-adenosyl-L-homocysteine + H(+). Functionally, specifically methylates the guanosine in position 1516 of 16S rRNA. The protein is Ribosomal RNA small subunit methyltransferase J of Shewanella baltica (strain OS185).